The chain runs to 987 residues: Pro-apoptotic serine protease NMA111 (987 aa).

The disordered stretch occupies residues 1–29; sequence MPDIPTKRRLSNGSVIDNTNKRQMQSSFV. Positions 11–28 are enriched in polar residues; the sequence is SNGSVIDNTNKRQMQSSF. The tract at residues 69–262 is serine protease; that stretch reads VKSVVSIQFT…LPVYRPLRAL (194 aa). Residues His110, Asp141, and Ser224 each act as charge relay system in the active site. 2 PDZ domains span residues 279–364 and 878–950; these read EWSL…VVIQ and PHHG…VSFD.

This sequence belongs to the peptidase S1C family.

It localises to the nucleus. Its function is as follows. Nuclear serine protease which mediates apoptosis. In Debaryomyces hansenii (strain ATCC 36239 / CBS 767 / BCRC 21394 / JCM 1990 / NBRC 0083 / IGC 2968) (Yeast), this protein is Pro-apoptotic serine protease NMA111 (NMA111).